A 94-amino-acid chain; its full sequence is Co-chaperonin GroES (94 aa).

It belongs to the GroES chaperonin family. As to quaternary structure, heptamer of 7 subunits arranged in a ring. Interacts with the chaperonin GroEL.

It localises to the cytoplasm. Functionally, together with the chaperonin GroEL, plays an essential role in assisting protein folding. The GroEL-GroES system forms a nano-cage that allows encapsulation of the non-native substrate proteins and provides a physical environment optimized to promote and accelerate protein folding. GroES binds to the apical surface of the GroEL ring, thereby capping the opening of the GroEL channel. The sequence is that of Co-chaperonin GroES from Bacillus licheniformis (strain ATCC 14580 / DSM 13 / JCM 2505 / CCUG 7422 / NBRC 12200 / NCIMB 9375 / NCTC 10341 / NRRL NRS-1264 / Gibson 46).